A 176-amino-acid chain; its full sequence is NAD(P)H-quinone oxidoreductase subunit 6, chloroplastic (176 aa).

Helical transmembrane passes span 10 to 30, 33 to 53, 61 to 81, 92 to 112, and 152 to 172; these read FLLVFLGLGLIVGGLGVVLLT, IYSAFSLGLVLVCISLFHIPA, AQLLIYVGAINVLIVFAVMFM, LWTVGDGVTSLVCTSIFVSLI, and FFLPFELISIILLVALIGAIA.

Belongs to the complex I subunit 6 family. In terms of assembly, NDH is composed of at least 16 different subunits, 5 of which are encoded in the nucleus.

It is found in the plastid. Its subcellular location is the chloroplast thylakoid membrane. The catalysed reaction is a plastoquinone + NADH + (n+1) H(+)(in) = a plastoquinol + NAD(+) + n H(+)(out). The enzyme catalyses a plastoquinone + NADPH + (n+1) H(+)(in) = a plastoquinol + NADP(+) + n H(+)(out). Its function is as follows. NDH shuttles electrons from NAD(P)H:plastoquinone, via FMN and iron-sulfur (Fe-S) centers, to quinones in the photosynthetic chain and possibly in a chloroplast respiratory chain. The immediate electron acceptor for the enzyme in this species is believed to be plastoquinone. Couples the redox reaction to proton translocation, and thus conserves the redox energy in a proton gradient. The polypeptide is NAD(P)H-quinone oxidoreductase subunit 6, chloroplastic (ndhG) (Nandina domestica (Heavenly bamboo)).